The sequence spans 941 residues: Isoleucine--tRNA ligase (941 aa).

The 'HIGH' region motif lies at 59–69 (PYANGNIHIGH). Glutamate 562 serves as a coordination point for L-isoleucyl-5'-AMP. Positions 603–607 (KMSKS) match the 'KMSKS' region motif. Lysine 606 is an ATP binding site. Cysteine 904, cysteine 907, cysteine 924, and cysteine 927 together coordinate Zn(2+).

Belongs to the class-I aminoacyl-tRNA synthetase family. IleS type 1 subfamily. In terms of assembly, monomer. The cofactor is Zn(2+).

The protein resides in the cytoplasm. It carries out the reaction tRNA(Ile) + L-isoleucine + ATP = L-isoleucyl-tRNA(Ile) + AMP + diphosphate. In terms of biological role, catalyzes the attachment of isoleucine to tRNA(Ile). As IleRS can inadvertently accommodate and process structurally similar amino acids such as valine, to avoid such errors it has two additional distinct tRNA(Ile)-dependent editing activities. One activity is designated as 'pretransfer' editing and involves the hydrolysis of activated Val-AMP. The other activity is designated 'posttransfer' editing and involves deacylation of mischarged Val-tRNA(Ile). The sequence is that of Isoleucine--tRNA ligase from Haemophilus influenzae (strain ATCC 51907 / DSM 11121 / KW20 / Rd).